The sequence spans 222 residues: Eukaryotic translation initiation factor 4E-2 (222 aa).

The span at 1-20 (MVDEVEKPVSLEESKTNTRE) shows a compositional bias: basic and acidic residues. Residues 1 to 35 (MVDEVEKPVSLEESKTNTREVEEEGEIVGESDDTM) are disordered. The segment covering 21–33 (VEEEGEIVGESDD) has biased composition (acidic residues). 2 EIF4G-binding regions span residues 47–50 (HALE) and 57–93 (FDNPSGKSKQAAWGSSIRPIYTFSTVEDFWSVYNNIH). MRNA is bound by residues 65–70 (KQAAWG), Lys-97, and 115–116 (WE). Cys-120 and Cys-158 are disulfide-bonded. The segment at 141 to 150 (YTLLAMIGEQ) is EIF4G-binding. Residues 165 to 170 (RVRQEK) and 210 to 214 (KKLDR) each bind mRNA.

The protein belongs to the eukaryotic initiation factor 4E family. In terms of assembly, EIF4F is a multi-subunit complex, the composition of which varies with external and internal environmental conditions. It is composed of at least EIF4A, EIF4E and EIF4G. EIF4E is also known to interact with other partners. In higher plants two isoforms of EIF4F have been identified, named isoform EIF4F and isoform EIF(iso)4F. Isoform EIF4F has subunits p220 and p26, whereas isoform EIF(iso)4F has subunits p82 and p28. As to quaternary structure, (Microbial infection) Interacts with potyvirus viral genome-linked protein (VPg); this interaction is possible in susceptible hosts but impaired in resistant plants. Post-translationally, according to the redox status, the Cys-120-Cys-158 disulfide bridge may have a role in regulating protein function by affecting its ability to bind capped mRNA. As to expression, strongly expressed in susceptible plants but not in resistant ones.

The protein resides in the nucleus. It is found in the cytoplasm. Component of the protein complex eIF4F, which is involved in the recognition of the mRNA cap, ATP-dependent unwinding of 5'-terminal secondary structure and recruitment of mRNA to the ribosome. Recognizes and binds the 7-methylguanosine-containing mRNA cap during an early step in the initiation of protein synthesis and facilitates ribosome binding by inducing the unwinding of the mRNAs secondary structures. Key component of recessive resistance to potyviruses. Functionally, (Microbial infection) Susceptibility host factor required for viral infection (e.g. potato virus Y (PVY) and pepper mottle virus (PepMoV)) by recruiting viral RNAs to the host ribosomal complex via an interaction with viral genome-linked protein (VPg). The polypeptide is Eukaryotic translation initiation factor 4E-2 (Nicotiana tabacum (Common tobacco)).